The following is a 464-amino-acid chain: Glycosyl hydrolase family 109 protein 1 (464 aa).

The signal sequence occupies residues 1-16 (MFKHLNALFIGLALFA). Cysteine 17 carries N-palmitoyl cysteine lipidation. Cysteine 17 carries the S-diacylglycerol cysteine lipid modification. Residues 63–64 (MR), aspartate 85, 134–137 (WKHH), 154–155 (EV), and asparagine 183 contribute to the NAD(+) site. Substrate is bound by residues tyrosine 212, arginine 228, 240–243 (YATH), and tyrosine 318. Tyrosine 240 is an NAD(+) binding site.

Belongs to the Gfo/Idh/MocA family. Glycosyl hydrolase 109 subfamily. NAD(+) serves as cofactor.

The protein localises to the cell membrane. Its function is as follows. Glycosidase. Has no alpha-N-acetylgalactosaminidase activity. In Bacteroides fragilis (strain ATCC 25285 / DSM 2151 / CCUG 4856 / JCM 11019 / LMG 10263 / NCTC 9343 / Onslow / VPI 2553 / EN-2), this protein is Glycosyl hydrolase family 109 protein 1.